A 512-amino-acid polypeptide reads, in one-letter code: 2,3-bisphosphoglycerate-independent phosphoglycerate mutase (512 aa).

Positions 12 and 62 each coordinate Mn(2+). Catalysis depends on S62, which acts as the Phosphoserine intermediate. Substrate contacts are provided by residues H123, 153 to 154 (RD), R185, R191, 260 to 263 (RPDR), and K333. D400, H404, D441, H442, and H460 together coordinate Mn(2+).

Belongs to the BPG-independent phosphoglycerate mutase family. Monomer. The cofactor is Mn(2+).

The catalysed reaction is (2R)-2-phosphoglycerate = (2R)-3-phosphoglycerate. It participates in carbohydrate degradation; glycolysis; pyruvate from D-glyceraldehyde 3-phosphate: step 3/5. Functionally, catalyzes the interconversion of 2-phosphoglycerate and 3-phosphoglycerate. The polypeptide is 2,3-bisphosphoglycerate-independent phosphoglycerate mutase (Clostridium perfringens (strain SM101 / Type A)).